Reading from the N-terminus, the 292-residue chain is ATP synthase gamma chain (292 aa).

It belongs to the ATPase gamma chain family. As to quaternary structure, F-type ATPases have 2 components, CF(1) - the catalytic core - and CF(0) - the membrane proton channel. CF(1) has five subunits: alpha(3), beta(3), gamma(1), delta(1), epsilon(1). CF(0) has three main subunits: a, b and c.

Its subcellular location is the cell inner membrane. Produces ATP from ADP in the presence of a proton gradient across the membrane. The gamma chain is believed to be important in regulating ATPase activity and the flow of protons through the CF(0) complex. In Chlorobaculum tepidum (strain ATCC 49652 / DSM 12025 / NBRC 103806 / TLS) (Chlorobium tepidum), this protein is ATP synthase gamma chain.